A 100-amino-acid chain; its full sequence is NADH-quinone oxidoreductase subunit K (100 aa).

Transmembrane regions (helical) follow at residues Met-1–Gly-21, Ile-28–Ala-48, and Phe-64–Phe-84.

This sequence belongs to the complex I subunit 4L family. As to quaternary structure, NDH-1 is composed of 14 different subunits. Subunits NuoA, H, J, K, L, M, N constitute the membrane sector of the complex.

The protein localises to the cell inner membrane. It carries out the reaction a quinone + NADH + 5 H(+)(in) = a quinol + NAD(+) + 4 H(+)(out). In terms of biological role, NDH-1 shuttles electrons from NADH, via FMN and iron-sulfur (Fe-S) centers, to quinones in the respiratory chain. The immediate electron acceptor for the enzyme in this species is believed to be ubiquinone. Couples the redox reaction to proton translocation (for every two electrons transferred, four hydrogen ions are translocated across the cytoplasmic membrane), and thus conserves the redox energy in a proton gradient. The chain is NADH-quinone oxidoreductase subunit K from Helicobacter pylori (strain Shi470).